Reading from the N-terminus, the 131-residue chain is Profilin (131 aa).

Belongs to the profilin family. In terms of assembly, occurs in many kinds of cells as a complex with monomeric actin in a 1:1 ratio.

The protein resides in the cytoplasm. The protein localises to the cytoskeleton. In terms of biological role, binds to actin and affects the structure of the cytoskeleton. At high concentrations, profilin prevents the polymerization of actin, whereas it enhances it at low concentrations. By binding to PIP2, it inhibits the formation of IP3 and DG. In Capsicum annuum (Capsicum pepper), this protein is Profilin.